A 219-amino-acid polypeptide reads, in one-letter code: MTQDEMKKAAGWAALQYVEENSIVGVGTGSTVNHFIDALATMKFDIEGAVSSSEASTEKMKALGIPVFDLNSVNELSVYVDGADEINSQMDMIKGGGAALTREKIVAAVADKFICIVDNTKQVDILGEFPLPIEVIPMARSYVARQIVKLGGDPVYREGCVTDNGNIIIDVYNMKIMKPKELEQQIDGIVGVVTNGLFAKRGADILLVGTPEGVKTVTF.

Residues 28–31, 81–84, and 94–97 each bind substrate; these read TGST, DGAD, and KGGG. The active-site Proton acceptor is glutamate 103. Lysine 121 is a binding site for substrate.

The protein belongs to the ribose 5-phosphate isomerase family. Homodimer.

It catalyses the reaction aldehydo-D-ribose 5-phosphate = D-ribulose 5-phosphate. It participates in carbohydrate degradation; pentose phosphate pathway; D-ribose 5-phosphate from D-ribulose 5-phosphate (non-oxidative stage): step 1/1. In terms of biological role, catalyzes the reversible conversion of ribose-5-phosphate to ribulose 5-phosphate. The sequence is that of Ribose-5-phosphate isomerase A from Shewanella pealeana (strain ATCC 700345 / ANG-SQ1).